Here is a 147-residue protein sequence, read N- to C-terminus: Large ribosomal subunit protein uL16 (147 aa).

The segment at 1-20 is disordered; the sequence is MLMPKKVKHRKVQRGRMKGK.

This sequence belongs to the universal ribosomal protein uL16 family. As to quaternary structure, part of the 50S ribosomal subunit.

In terms of biological role, binds 23S rRNA and is also seen to make contacts with the A and possibly P site tRNAs. This Clostridium kluyveri (strain ATCC 8527 / DSM 555 / NBRC 12016 / NCIMB 10680 / K1) protein is Large ribosomal subunit protein uL16.